We begin with the raw amino-acid sequence, 491 residues long: Glutamyl-tRNA(Gln) amidotransferase subunit A (491 aa).

Active-site charge relay system residues include K78 and S158. S182 acts as the Acyl-ester intermediate in catalysis.

Belongs to the amidase family. GatA subfamily. In terms of assembly, heterotrimer of A, B and C subunits.

It catalyses the reaction L-glutamyl-tRNA(Gln) + L-glutamine + ATP + H2O = L-glutaminyl-tRNA(Gln) + L-glutamate + ADP + phosphate + H(+). Functionally, allows the formation of correctly charged Gln-tRNA(Gln) through the transamidation of misacylated Glu-tRNA(Gln) in organisms which lack glutaminyl-tRNA synthetase. The reaction takes place in the presence of glutamine and ATP through an activated gamma-phospho-Glu-tRNA(Gln). The protein is Glutamyl-tRNA(Gln) amidotransferase subunit A of Nitrobacter hamburgensis (strain DSM 10229 / NCIMB 13809 / X14).